A 413-amino-acid polypeptide reads, in one-letter code: Putative F-box protein At3g23970 (413 aa).

In terms of domain architecture, F-box spans 1–42 (MNIPPELTFEVLVRLPLKSLARFRSVRKEWKLVIDSEFFRDC).

The polypeptide is Putative F-box protein At3g23970 (Arabidopsis thaliana (Mouse-ear cress)).